The following is a 618-amino-acid chain: Proline--tRNA ligase (618 aa).

The protein belongs to the class-II aminoacyl-tRNA synthetase family. ProS type 1 subfamily. In terms of assembly, homodimer.

The protein resides in the cytoplasm. It catalyses the reaction tRNA(Pro) + L-proline + ATP = L-prolyl-tRNA(Pro) + AMP + diphosphate. In terms of biological role, catalyzes the attachment of proline to tRNA(Pro) in a two-step reaction: proline is first activated by ATP to form Pro-AMP and then transferred to the acceptor end of tRNA(Pro). As ProRS can inadvertently accommodate and process non-cognate amino acids such as alanine and cysteine, to avoid such errors it has two additional distinct editing activities against alanine. One activity is designated as 'pretransfer' editing and involves the tRNA(Pro)-independent hydrolysis of activated Ala-AMP. The other activity is designated 'posttransfer' editing and involves deacylation of mischarged Ala-tRNA(Pro). The misacylated Cys-tRNA(Pro) is not edited by ProRS. This chain is Proline--tRNA ligase, found in Streptococcus uberis (strain ATCC BAA-854 / 0140J).